Reading from the N-terminus, the 151-residue chain is Ribonuclease H (151 aa).

The RNase H type-1 domain occupies 1 to 143 (MEEYVIYTDG…VDRVARKEAA (143 aa)). The Mg(2+) site is built by Asp-9, Glu-48, Asp-71, and Asp-135.

This sequence belongs to the RNase H family. As to quaternary structure, monomer. Requires Mg(2+) as cofactor.

The protein resides in the cytoplasm. It carries out the reaction Endonucleolytic cleavage to 5'-phosphomonoester.. Endonuclease that specifically degrades the RNA of RNA-DNA hybrids. In Neorickettsia sennetsu (strain ATCC VR-367 / Miyayama) (Ehrlichia sennetsu), this protein is Ribonuclease H.